The sequence spans 382 residues: Anhydro-N-acetylmuramic acid kinase (382 aa).

ATP is bound at residue 22-29; sequence GTSMDGVD.

The protein belongs to the anhydro-N-acetylmuramic acid kinase family.

The enzyme catalyses 1,6-anhydro-N-acetyl-beta-muramate + ATP + H2O = N-acetyl-D-muramate 6-phosphate + ADP + H(+). Its pathway is amino-sugar metabolism; 1,6-anhydro-N-acetylmuramate degradation. The protein operates within cell wall biogenesis; peptidoglycan recycling. Functionally, catalyzes the specific phosphorylation of 1,6-anhydro-N-acetylmuramic acid (anhMurNAc) with the simultaneous cleavage of the 1,6-anhydro ring, generating MurNAc-6-P. Is required for the utilization of anhMurNAc either imported from the medium or derived from its own cell wall murein, and thus plays a role in cell wall recycling. The polypeptide is Anhydro-N-acetylmuramic acid kinase (Burkholderia vietnamiensis (strain G4 / LMG 22486) (Burkholderia cepacia (strain R1808))).